The following is a 305-amino-acid chain: Methionyl-tRNA formyltransferase (305 aa).

111-114 (SLLP) provides a ligand contact to (6S)-5,6,7,8-tetrahydrofolate.

Belongs to the Fmt family.

The catalysed reaction is L-methionyl-tRNA(fMet) + (6R)-10-formyltetrahydrofolate = N-formyl-L-methionyl-tRNA(fMet) + (6S)-5,6,7,8-tetrahydrofolate + H(+). In terms of biological role, attaches a formyl group to the free amino group of methionyl-tRNA(fMet). The formyl group appears to play a dual role in the initiator identity of N-formylmethionyl-tRNA by promoting its recognition by IF2 and preventing the misappropriation of this tRNA by the elongation apparatus. This chain is Methionyl-tRNA formyltransferase, found in Helicobacter acinonychis (strain Sheeba).